The sequence spans 331 residues: D-lactate dehydrogenase (331 aa).

NAD(+)-binding positions include 156-157 (RI), D176, 206-207 (MP), 233-235 (TAR), and D259. R235 is a catalytic residue. The active site involves E264. H296 acts as the Proton donor in catalysis.

The protein belongs to the D-isomer specific 2-hydroxyacid dehydrogenase family.

It carries out the reaction (R)-lactate + NAD(+) = pyruvate + NADH + H(+). The protein is D-lactate dehydrogenase (ldhD) of Treponema pallidum (strain Nichols).